A 153-amino-acid polypeptide reads, in one-letter code: Ribonuclease H (153 aa).

Residues methionine 1–lysine 142 form the RNase H type-1 domain. Aspartate 10, glutamate 48, aspartate 70, and aspartate 134 together coordinate Mg(2+).

Belongs to the RNase H family. Monomer. It depends on Mg(2+) as a cofactor.

It is found in the cytoplasm. The enzyme catalyses Endonucleolytic cleavage to 5'-phosphomonoester.. In terms of biological role, endonuclease that specifically degrades the RNA of RNA-DNA hybrids. The chain is Ribonuclease H from Buchnera aphidicola subsp. Baizongia pistaciae (strain Bp).